A 248-amino-acid chain; its full sequence is Probable transcriptional regulatory protein RPC_4807 (248 aa).

The segment at 1 to 21 (MAGHSQFKNIMHRKGRQDAQK) is disordered.

It belongs to the TACO1 family.

The protein localises to the cytoplasm. The polypeptide is Probable transcriptional regulatory protein RPC_4807 (Rhodopseudomonas palustris (strain BisB18)).